A 297-amino-acid polypeptide reads, in one-letter code: Bifunctional protein FolD (297 aa).

NADP(+) is bound by residues 164–166 (GRS), S193, and V234.

This sequence belongs to the tetrahydrofolate dehydrogenase/cyclohydrolase family. In terms of assembly, homodimer.

It carries out the reaction (6R)-5,10-methylene-5,6,7,8-tetrahydrofolate + NADP(+) = (6R)-5,10-methenyltetrahydrofolate + NADPH. The catalysed reaction is (6R)-5,10-methenyltetrahydrofolate + H2O = (6R)-10-formyltetrahydrofolate + H(+). It functions in the pathway one-carbon metabolism; tetrahydrofolate interconversion. Functionally, catalyzes the oxidation of 5,10-methylenetetrahydrofolate to 5,10-methenyltetrahydrofolate and then the hydrolysis of 5,10-methenyltetrahydrofolate to 10-formyltetrahydrofolate. The chain is Bifunctional protein FolD from Natronomonas pharaonis (strain ATCC 35678 / DSM 2160 / CIP 103997 / JCM 8858 / NBRC 14720 / NCIMB 2260 / Gabara) (Halobacterium pharaonis).